The following is a 321-amino-acid chain: Cytochrome c biogenesis protein CcsA (321 aa).

Helical transmembrane passes span 17 to 37 (IISIVITIHLVTLLVHEIVGL), 43 to 63 (KGMIAAFFCITGLLVTRWIYS), 71 to 91 (LYESLMFLSWSFSIIHMVPKI), 143 to 163 (MLLSYAALLCGSLLSVALLVI), 225 to 245 (VISLGFTFLTIGILSGAVWAN), 258 to 273 (ETWAFITWTIFAIYLH), and 286 to 306 (AIVASMGFLIIWICYFGVNLL).

This sequence belongs to the CcmF/CycK/Ccl1/NrfE/CcsA family. As to quaternary structure, may interact with Ccs1.

It is found in the plastid. The protein localises to the chloroplast thylakoid membrane. Functionally, required during biogenesis of c-type cytochromes (cytochrome c6 and cytochrome f) at the step of heme attachment. This Liriodendron tulipifera (Tuliptree) protein is Cytochrome c biogenesis protein CcsA.